A 524-amino-acid polypeptide reads, in one-letter code: MVPPRHHPGAGRPGALSSSPPFRLRSSKFSGIALQDLRKAFKIRLQMVCVFIMNRMNSQSSGFTQRKRMALGIVILLLVDVIWVASSELTSYVFTQYNKPFFSTFAKTSMFVLYLLGFIVWKPWRQQCTRGFRGKHATFFADAEGYFAACTTDTTMNSSLSEPLYVPVKFHDLPSEKPENTNIDTEKIPKKSRVRFSNIMEIRQLPSSHALEAKLSRMSYPTVKEQESLLKTVGKLTATQVAKISFFFCFVWFLANFSYQEALSDTQVAIVNILSSTSGLFTLILAAMFPSNSGDRFTLSKLLAVILSIGGVVLVNLSGSEKSPGRNTIGSIWSLVGAMLYAVYIVMIKRKVDREDKLDIPMFFGFVGLFNLLLLWPGFFLLHYTGFEDFEFPNKVVLMCIVINGLIGTVLSEFLWLWGCFLTSSLIGTLALSLTIPLSIIADMCMQKVQFSWLFFAGAIPVFFSFFIATLLCHYNNWDPVMVGIRRIFAFICRKHRIQKVPEDSEQCESLIPMHGVSQEDGAS.

The tract at residues 1–22 (MVPPRHHPGAGRPGALSSSPPF) is disordered. A compositionally biased stretch (low complexity) spans 13-22 (PGALSSSPPF). 2 consecutive transmembrane segments (helical) span residues 69-89 (MALGIVILLLVDVIWVASSEL) and 101-121 (FFSTFAKTSMFVLYLLGFIVW). Residue serine 207 is modified to Phosphoserine. A run of 8 helical transmembrane segments spans residues 244 to 264 (ISFFFCFVWFLANFSYQEALS), 269 to 289 (AIVNILSSTSGLFTLILAAMF), 297 to 317 (FTLSKLLAVILSIGGVVLVNL), 328 to 348 (TIGSIWSLVGAMLYAVYIVMI), 362 to 382 (MFFGFVGLFNLLLLWPGFFLL), 396 to 416 (VVLMCIVINGLIGTVLSEFLW), 421 to 441 (FLTSSLIGTLALSLTIPLSII), and 453 to 473 (WLFFAGAIPVFFSFFIATLLC). Residues 253–317 (FLANFSYQEA…SIGGVVLVNL (65 aa)) form the EamA domain.

It belongs to the SLC35F solute transporter family.

The protein localises to the membrane. Functionally, putative solute transporter. The chain is Solute carrier family 35 member F5 (SLC35F5) from Bos taurus (Bovine).